Consider the following 595-residue polypeptide: Beta-(1--&gt;2)glucan export ATP-binding/permease protein NdvA (595 aa).

The next 5 helical transmembrane spans lie at 21–41 (FLLI…EPIL), 56–76 (LVTL…YVLV), 129–149 (IWLE…VLVP), 158–178 (LSIV…LVMQ), and 252–272 (ISIV…QLSV). Positions 21–301 (FLLICTANIT…ISGFINLAVS (281 aa)) constitute an ABC transmembrane type-1 domain. The ABC transporter domain maps to 335 to 569 (IQFHHVTYEF…DGHFYKLLKA (235 aa)). Residue 368-375 (GPTGAGKT) coordinates ATP.

This sequence belongs to the ABC transporter superfamily. Beta-(1--&gt;2)glucan exporter (TC 3.A.1.108.1) family. Homodimer.

The protein localises to the cell inner membrane. It carries out the reaction [(1-&gt;2)-beta-D-glucosyl](n)(in) + ATP + H2O = [(1-&gt;2)-beta-D-glucosyl](n)(out) + ADP + phosphate + H(+). Its function is as follows. Involved in beta-(1--&gt;2)glucan export. Transmembrane domains (TMD) form a pore in the inner membrane and the ATP-binding domain (NBD) is responsible for energy generation. This Bartonella bacilliformis (strain ATCC 35685 / KC583 / Herrer 020/F12,63) protein is Beta-(1--&gt;2)glucan export ATP-binding/permease protein NdvA.